The chain runs to 34 residues: Ornithine carbamoyltransferase, catabolic (34 aa).

The protein belongs to the aspartate/ornithine carbamoyltransferase superfamily. OTCase family. In terms of assembly, probably nonameric or dodecameric.

It is found in the cytoplasm. It carries out the reaction carbamoyl phosphate + L-ornithine = L-citrulline + phosphate + H(+). It functions in the pathway amino-acid degradation; L-arginine degradation via ADI pathway; carbamoyl phosphate from L-arginine: step 2/2. The chain is Ornithine carbamoyltransferase, catabolic (arcB) from Pseudomonas putida (Arthrobacter siderocapsulatus).